A 273-amino-acid polypeptide reads, in one-letter code: 2,3,4,5-tetrahydropyridine-2,6-dicarboxylate N-succinyltransferase (273 aa).

Substrate is bound by residues arginine 104 and aspartate 141.

Belongs to the transferase hexapeptide repeat family. As to quaternary structure, homotrimer.

It is found in the cytoplasm. It catalyses the reaction (S)-2,3,4,5-tetrahydrodipicolinate + succinyl-CoA + H2O = (S)-2-succinylamino-6-oxoheptanedioate + CoA. Its pathway is amino-acid biosynthesis; L-lysine biosynthesis via DAP pathway; LL-2,6-diaminopimelate from (S)-tetrahydrodipicolinate (succinylase route): step 1/3. The protein is 2,3,4,5-tetrahydropyridine-2,6-dicarboxylate N-succinyltransferase of Nitrosococcus oceani (strain ATCC 19707 / BCRC 17464 / JCM 30415 / NCIMB 11848 / C-107).